The primary structure comprises 879 residues: Alanine--tRNA ligase (879 aa).

Zn(2+)-binding residues include His566, His570, Cys668, and His672.

This sequence belongs to the class-II aminoacyl-tRNA synthetase family. Zn(2+) serves as cofactor.

It localises to the cytoplasm. The enzyme catalyses tRNA(Ala) + L-alanine + ATP = L-alanyl-tRNA(Ala) + AMP + diphosphate. Its function is as follows. Catalyzes the attachment of alanine to tRNA(Ala) in a two-step reaction: alanine is first activated by ATP to form Ala-AMP and then transferred to the acceptor end of tRNA(Ala). Also edits incorrectly charged Ser-tRNA(Ala) and Gly-tRNA(Ala) via its editing domain. This is Alanine--tRNA ligase from Listeria welshimeri serovar 6b (strain ATCC 35897 / DSM 20650 / CCUG 15529 / CIP 8149 / NCTC 11857 / SLCC 5334 / V8).